The chain runs to 206 residues: ATP phosphoribosyltransferase (206 aa).

This sequence belongs to the ATP phosphoribosyltransferase family. Short subfamily. Heteromultimer composed of HisG and HisZ subunits.

It localises to the cytoplasm. It catalyses the reaction 1-(5-phospho-beta-D-ribosyl)-ATP + diphosphate = 5-phospho-alpha-D-ribose 1-diphosphate + ATP. Its pathway is amino-acid biosynthesis; L-histidine biosynthesis; L-histidine from 5-phospho-alpha-D-ribose 1-diphosphate: step 1/9. Functionally, catalyzes the condensation of ATP and 5-phosphoribose 1-diphosphate to form N'-(5'-phosphoribosyl)-ATP (PR-ATP). Has a crucial role in the pathway because the rate of histidine biosynthesis seems to be controlled primarily by regulation of HisG enzymatic activity. The polypeptide is ATP phosphoribosyltransferase (Thermus thermophilus (strain ATCC 27634 / DSM 579 / HB8)).